A 151-amino-acid polypeptide reads, in one-letter code: NADPH-dependent 7-cyano-7-deazaguanine reductase (151 aa).

The active-site Thioimide intermediate is cysteine 51. Catalysis depends on aspartate 58, which acts as the Proton donor. Residues 73 to 75 (VES) and 92 to 93 (HE) contribute to the substrate site.

It belongs to the GTP cyclohydrolase I family. QueF type 1 subfamily.

It is found in the cytoplasm. The enzyme catalyses 7-aminomethyl-7-carbaguanine + 2 NADP(+) = 7-cyano-7-deazaguanine + 2 NADPH + 3 H(+). It participates in tRNA modification; tRNA-queuosine biosynthesis. Its function is as follows. Catalyzes the NADPH-dependent reduction of 7-cyano-7-deazaguanine (preQ0) to 7-aminomethyl-7-deazaguanine (preQ1). The chain is NADPH-dependent 7-cyano-7-deazaguanine reductase from Bacteroides fragilis (strain ATCC 25285 / DSM 2151 / CCUG 4856 / JCM 11019 / LMG 10263 / NCTC 9343 / Onslow / VPI 2553 / EN-2).